A 96-amino-acid polypeptide reads, in one-letter code: Large ribosomal subunit protein bL21 (96 aa).

Residues 73–84 (KRRKRYQSRNGH) show a composition bias toward basic residues. The interval 73–96 (KRRKRYQSRNGHRQQMTQIEVVSL) is disordered. A compositionally biased stretch (polar residues) spans 85–96 (RQQMTQIEVVSL).

Belongs to the bacterial ribosomal protein bL21 family. As to quaternary structure, part of the 50S ribosomal subunit. Contacts protein L20.

In terms of biological role, this protein binds to 23S rRNA in the presence of protein L20. The chain is Large ribosomal subunit protein bL21 from Chlorobium phaeovibrioides (strain DSM 265 / 1930) (Prosthecochloris vibrioformis (strain DSM 265)).